Consider the following 427-residue polypeptide: Probable purple acid phosphatase 20 (427 aa).

An N-terminal signal peptide occupies residues 1 to 21; sequence MVKVLGLVAILLIVLAGNVLS. The N-linked (GlcNAc...) asparagine glycan is linked to asparagine 85. Fe cation contacts are provided by aspartate 147, aspartate 174, and tyrosine 177. Aspartate 174 provides a ligand contact to Zn(2+). Asparagine 207 and histidine 291 together coordinate Zn(2+). Asparagine 207 contacts substrate. Histidine 301 functions as the Proton donor in the catalytic mechanism. Histidine 330 provides a ligand contact to Zn(2+). A substrate-binding site is contributed by 330–332; it reads HVH. Fe cation is bound at residue histidine 332. N-linked (GlcNAc...) asparagine glycosylation occurs at asparagine 392.

The protein belongs to the metallophosphoesterase superfamily. Purple acid phosphatase family. As to quaternary structure, homodimer. Fe cation serves as cofactor. It depends on Zn(2+) as a cofactor. Expressed flowers and siliques.

It localises to the secreted. The catalysed reaction is a phosphate monoester + H2O = an alcohol + phosphate. This is Probable purple acid phosphatase 20 (PAP20) from Arabidopsis thaliana (Mouse-ear cress).